Consider the following 488-residue polypeptide: Cytochrome P450 family 716 subfamily AD polypeptide 2 (488 aa).

A helical transmembrane segment spans residues 5-25 (LLLLSTLLILTLCCHFFYLFI). Position 433 (Cys433) interacts with heme.

Belongs to the cytochrome P450 family. Heme is required as a cofactor. As to expression, expressed in maturing fruits and in juice vesicles.

It localises to the membrane. It catalyses the reaction (1R,2R,3S,8R,10R,11R,15S,16S)-3-(acetyloxy)-15-[(4R)-4-[(2S)-3,3-dimethyloxiran-2-yl]-1,4-dihydroxybutan-2-yl]-2,7,7,11,16-pentamethyl-5-oxo-6-oxatetracyclo[9.7.0.0(2,8).0(12,16)]octadec-12-en-10-yl acetate + reduced [NADPH--hemoprotein reductase] + O2 = (1R,2R,3S,8R,10R,11R,15S,16S)-3-(acetyloxy)-15-(1-hydroxy-4-oxobutan-2-yl)-2,7,7,11,16-pentamethyl-5-oxo-6-oxatetracyclo[9.7.0.0(2,8).0(12,16)]octadec-12-en-10-yl acetate + 2-methylpropanoate + oxidized [NADPH--hemoprotein reductase] + H2O + 2 H(+). Its pathway is secondary metabolite biosynthesis; terpenoid biosynthesis. Its function is as follows. Monooxygenase involved in the biosynthesis of limonoids triterpene natural products such as limonin, a compound with insecticidal activity responsible for the bitter taste in citrus. Catalyzes the formation of (1R,2R,3S,8R,10R,11R,15S,16S)-3-(acetyloxy)-15-(1-hydroxy-4-oxobutan-2-yl)-2,7,7,11,16-pentamethyl-5-oxo-6-oxatetracyclo[9.7.0.0(2,8).0(12,16)]octadec-12-en-10-yl acetate. In Citrus sinensis (Sweet orange), this protein is Cytochrome P450 family 716 subfamily AD polypeptide 2.